The following is a 499-amino-acid chain: Catalase (499 aa).

The segment at methionine 1 to glycine 25 is disordered. The span at methionine 7–threonine 23 shows a compositional bias: polar residues. Active-site residues include histidine 55 and asparagine 127. Tyrosine 337 lines the heme pocket.

This sequence belongs to the catalase family. Homotetramer. Heme is required as a cofactor.

The protein localises to the periplasm. The enzyme catalyses 2 H2O2 = O2 + 2 H2O. Decomposes hydrogen peroxide into water and oxygen; serves to protect cells from the toxic effects of hydrogen peroxide. The polypeptide is Catalase (katA) (Brucella abortus biovar 1 (strain 9-941)).